The chain runs to 166 residues: NADPH-dependent 7-cyano-7-deazaguanine reductase (166 aa).

The Thioimide intermediate role is filled by C57. D64 acts as the Proton donor in catalysis. Residues 79-81 (VES) and 98-99 (HE) each bind substrate.

It belongs to the GTP cyclohydrolase I family. QueF type 1 subfamily.

Its subcellular location is the cytoplasm. It carries out the reaction 7-aminomethyl-7-carbaguanine + 2 NADP(+) = 7-cyano-7-deazaguanine + 2 NADPH + 3 H(+). The protein operates within tRNA modification; tRNA-queuosine biosynthesis. In terms of biological role, catalyzes the NADPH-dependent reduction of 7-cyano-7-deazaguanine (preQ0) to 7-aminomethyl-7-deazaguanine (preQ1). The polypeptide is NADPH-dependent 7-cyano-7-deazaguanine reductase (Staphylococcus aureus (strain MRSA252)).